A 331-amino-acid polypeptide reads, in one-letter code: NADH-quinone oxidoreductase subunit H (331 aa).

8 helical membrane-spanning segments follow: residues Ala7 to Ile27, Met81 to Val101, Ile114 to Gly134, Ile154 to Phe174, Val187 to Val207, Phe238 to Phe258, Trp271 to Ile291, and Val310 to Ala330.

It belongs to the complex I subunit 1 family. As to quaternary structure, NDH-1 is composed of 13 different subunits. Subunits NuoA, H, J, K, L, M, N constitute the membrane sector of the complex.

Its subcellular location is the cell inner membrane. The enzyme catalyses a quinone + NADH + 5 H(+)(in) = a quinol + NAD(+) + 4 H(+)(out). NDH-1 shuttles electrons from NADH, via FMN and iron-sulfur (Fe-S) centers, to quinones in the respiratory chain. The immediate electron acceptor for the enzyme in this species is believed to be ubiquinone. Couples the redox reaction to proton translocation (for every two electrons transferred, four hydrogen ions are translocated across the cytoplasmic membrane), and thus conserves the redox energy in a proton gradient. This subunit may bind ubiquinone. The sequence is that of NADH-quinone oxidoreductase subunit H from Pseudomonas aeruginosa (strain ATCC 15692 / DSM 22644 / CIP 104116 / JCM 14847 / LMG 12228 / 1C / PRS 101 / PAO1).